Reading from the N-terminus, the 616-residue chain is uncharacterized protein (616 aa).

This is an uncharacterized protein from Methanocaldococcus jannaschii (strain ATCC 43067 / DSM 2661 / JAL-1 / JCM 10045 / NBRC 100440) (Methanococcus jannaschii).